We begin with the raw amino-acid sequence, 490 residues long: Betaine aldehyde dehydrogenase (490 aa).

Residue Asp93 participates in K(+) binding. Residue 150 to 152 (GAW) participates in NAD(+) binding. The active-site Charge relay system is Lys162. 176–179 (KPSE) is a binding site for NAD(+). Val180 contributes to the K(+) binding site. 230–233 (GIAS) lines the NAD(+) pocket. Leu246 lines the K(+) pocket. Glu252 (proton acceptor) is an active-site residue. NAD(+)-binding residues include Gly254, Cys286, and Glu387. Cys286 acts as the Nucleophile in catalysis. At Cys286 the chain carries Cysteine sulfenic acid (-SOH). Residues Lys457 and Gly460 each contribute to the K(+) site. Glu464 serves as the catalytic Charge relay system.

Belongs to the aldehyde dehydrogenase family. In terms of assembly, dimer of dimers. Requires K(+) as cofactor.

The catalysed reaction is betaine aldehyde + NAD(+) + H2O = glycine betaine + NADH + 2 H(+). The protein operates within amine and polyamine biosynthesis; betaine biosynthesis via choline pathway; betaine from betaine aldehyde: step 1/1. Its function is as follows. Involved in the biosynthesis of the osmoprotectant glycine betaine. Catalyzes the irreversible oxidation of betaine aldehyde to the corresponding acid. The chain is Betaine aldehyde dehydrogenase from Yersinia pseudotuberculosis serotype I (strain IP32953).